The primary structure comprises 199 residues: Large ribosomal subunit protein uL4 (199 aa).

The protein belongs to the universal ribosomal protein uL4 family. Part of the 50S ribosomal subunit.

Its function is as follows. One of the primary rRNA binding proteins, this protein initially binds near the 5'-end of the 23S rRNA. It is important during the early stages of 50S assembly. It makes multiple contacts with different domains of the 23S rRNA in the assembled 50S subunit and ribosome. In terms of biological role, forms part of the polypeptide exit tunnel. The protein is Large ribosomal subunit protein uL4 of Aquifex aeolicus (strain VF5).